Consider the following 288-residue polypeptide: MEKYHGLEKIGEGTYGVVYKAQNNYGETFALKKIRLEKEDEGIPSTTIREISILKELKHSNIVKLYDVIHTKKRLVLVFEHLDQDLKKLLDVCEGGLESVTAKSFLLQLLNGIAYCHDRRVLHRDLKPQNLLINREGELKIADFGLARAFGIPVRKYTHEVVTLWYRAPDVLMGSKKYSTTIDIWSVGCIFAEMVNGTPLFPGVSEADQLMRIFRILGTPNSKNWPNVTELPKYDPNFTVYEPLPWESFLKGLDESGIDLLSKMLKLDPNQRITAKQALEHAYFKENN.

The Protein kinase domain maps to 4 to 284 (YHGLEKIGEG…AKQALEHAYF (281 aa)). ATP is bound by residues 10 to 18 (IGEGTYGVV) and lysine 32. Position 14 is a phosphothreonine (threonine 14). Tyrosine 15 is modified (phosphotyrosine). Catalysis depends on aspartate 125, which acts as the Proton acceptor. Threonine 158 bears the Phosphothreonine mark.

Belongs to the protein kinase superfamily. CMGC Ser/Thr protein kinase family. CDC2/CDKX subfamily. May form a complex composed of at least the catalytic subunit CRK2 and a cyclin. Mg(2+) serves as cofactor. Autophosphorylates in presence of cyclin cyc-1 but not in presence of cyclin cyc-3.

Its subcellular location is the cytoplasm. The catalysed reaction is L-seryl-[protein] + ATP = O-phospho-L-seryl-[protein] + ADP + H(+). It carries out the reaction L-threonyl-[protein] + ATP = O-phospho-L-threonyl-[protein] + ADP + H(+). The enzyme catalyses [DNA-directed RNA polymerase] + ATP = phospho-[DNA-directed RNA polymerase] + ADP + H(+). With respect to regulation, phosphorylation at Thr-14 or Tyr-15 inactivates the enzyme, while phosphorylation at Thr-158 activates it. Activated by cyclin cyc-1 in vitro. Activated by cyclin cyc-3 in vitro. Functionally, serine/threonine-protein kinase. Involved in the control of the cell cycle. Required for entry into S-phase and mitosis. Probable component of the kinase complex that phosphorylates the repetitive C-terminus of RNA polymerase II. In schizonts, phosphorylates ORC1 resulting in its dissociation from DNA, relocalization to the cytoplasm and likely its degradation. This chain is Cyclin-dependent kinase 2 homolog, found in Plasmodium falciparum (isolate 3D7).